The sequence spans 75 residues: UPF0181 protein ETA_15280 (75 aa).

Belongs to the UPF0181 family.

This is UPF0181 protein ETA_15280 from Erwinia tasmaniensis (strain DSM 17950 / CFBP 7177 / CIP 109463 / NCPPB 4357 / Et1/99).